Consider the following 490-residue polypeptide: B3 domain-containing protein REM14 (490 aa).

3 consecutive DNA-binding regions (TF-B3) follow at residues N3–S95, C130–G226, and C236–E333. Residues N343 to R367 are disordered. Over residues Q352–I364 the composition is skewed to basic and acidic residues. A DNA-binding region (TF-B3 4) is located at residues F387–K484.

It localises to the nucleus. This chain is B3 domain-containing protein REM14 (REM14), found in Arabidopsis thaliana (Mouse-ear cress).